The primary structure comprises 268 residues: Protein APE_1980.1 (268 aa).

The protein belongs to the CinA family.

The polypeptide is Protein APE_1980.1 (Aeropyrum pernix (strain ATCC 700893 / DSM 11879 / JCM 9820 / NBRC 100138 / K1)).